Here is a 136-residue protein sequence, read N- to C-terminus: UPF0216 protein PYRAB16100 (136 aa).

It belongs to the UPF0216 family.

The chain is UPF0216 protein PYRAB16100 from Pyrococcus abyssi (strain GE5 / Orsay).